The following is a 218-amino-acid chain: Guanylate kinase (218 aa).

Residues 14 to 193 enclose the Guanylate kinase-like domain; sequence GLMLVLSSPS…AFAEVRGIVV (180 aa). An ATP-binding site is contributed by 21 to 28; sequence SPSGAGKS.

It belongs to the guanylate kinase family.

It localises to the cytoplasm. The catalysed reaction is GMP + ATP = GDP + ADP. In terms of biological role, essential for recycling GMP and indirectly, cGMP. This chain is Guanylate kinase (gmk), found in Mesorhizobium japonicum (strain LMG 29417 / CECT 9101 / MAFF 303099) (Mesorhizobium loti (strain MAFF 303099)).